The following is a 562-amino-acid chain: Probable sesquiterpene synthase (562 aa).

Positions 315, 319, and 467 each coordinate Mg(2+). A DDXXD motif motif is present at residues 315-319 (DDIYD).

The protein belongs to the terpene synthase family. Tpsa subfamily. Requires Mg(2+) as cofactor. The cofactor is Mn(2+).

Sesquiterpene synthase. In Santalum murrayanum (Bitter quandong), this protein is Probable sesquiterpene synthase (STPS).